We begin with the raw amino-acid sequence, 227 residues long: Superoxide dismutase [Cu-Zn] (227 aa).

The signal sequence occupies residues 1–19 (MPKLLPPVVLAGCVVALGA). Cys20 is lipidated: N-palmitoyl cysteine. Cys20 is lipidated: S-diacylglycerol cysteine. The segment at 23-55 (PQHASSLPGTTPAVWTGSPSPSGAGAAEAAPAA) is disordered. Residues 39 to 55 (GSPSPSGAGAAEAAPAA) show a composition bias toward low complexity. Cu cation-binding residues include His103 and His105. Cys110 and Cys221 are disulfide-bonded. A Zn(2+)-binding site is contributed by Asp145. Residue His182 coordinates Cu cation.

This sequence belongs to the Cu-Zn superoxide dismutase family. Requires Cu cation as cofactor. Zn(2+) is required as a cofactor.

The protein localises to the cell membrane. The enzyme catalyses 2 superoxide + 2 H(+) = H2O2 + O2. Functionally, destroys radicals which are normally produced within the cells and which are toxic to biological systems. May play a role in favoring mycobacterial survival in phagocytes. The protein is Superoxide dismutase [Cu-Zn] (sodC) of Mycolicibacterium paratuberculosis (strain ATCC BAA-968 / K-10) (Mycobacterium paratuberculosis).